We begin with the raw amino-acid sequence, 548 residues long: Probable inorganic phosphate transporter 1-5 (548 aa).

The Cytoplasmic portion of the chain corresponds to 1–23 (MVQDRKVLDALDTAKTQWYHFTA). A helical membrane pass occupies residues 24 to 44 (VVIAGMGFFTDAYDLFSISLV). Over 45-69 (TKLLGRIYYFNPASKSPGSLPPNVS) the chain is Extracellular. Residues 70 to 90 (AAVNGVAFCGTLAGQLFFGWL) form a helical membrane-spanning segment. Topologically, residues 91-98 (GDKMGRKK) are cytoplasmic. The chain crosses the membrane as a helical span at residues 99-119 (VYGMTLMLMVICCLASGLSFG). Residues 120–123 (SSAK) lie on the Extracellular side of the membrane. A helical transmembrane segment spans residues 124–144 (GVMATLCFFRFWLGFGIGGDY). Over 145–163 (PLSATIMSEYANKRTRGAF) the chain is Cytoplasmic. The helical transmembrane segment at 164-184 (IAAVFAMQGFGNLTGGIVAII) threads the bilayer. Residues 185–210 (VSAAFKLRFDAPAYRDDRAGSTVPQA) are Extracellular-facing. A helical membrane pass occupies residues 211-231 (DYAWRIVLMFGAIPALLTYYW). Over 232 to 303 (RMKMPETARY…REFARRHGHH (72 aa)) the chain is Cytoplasmic. A helical membrane pass occupies residues 304–324 (LLGTTVCWFVLDIAYYSQNLF). Topologically, residues 325-355 (QKDIYTAVQWLPKADTMSALEEMFKISRAQT) are extracellular. Residues 356 to 376 (LVALCGTIPGYWFTVLFIDIV) traverse the membrane as a helical segment. Topologically, residues 377 to 378 (GR) are cytoplasmic. Residues 379–399 (FAIQLGGFFLMTAFMLGLAVP) traverse the membrane as a helical segment. Residues 400–405 (YHHWTT) lie on the Extracellular side of the membrane. The chain crosses the membrane as a helical span at residues 406–426 (PGNHVGFVVMYAFTFFFANFG). The Cytoplasmic segment spans residues 427-449 (PNSTTFIVPAEIFPARLRSTCHG). The chain crosses the membrane as a helical span at residues 450-470 (ISSAAGKMGAIVGSFGFLYAA). Topologically, residues 471–490 (QSTDPSKTDAGYPRGIGVRN) are extracellular. The helical transmembrane segment at 491 to 511 (SLFLLAGCNVVGFLFTFLVPE) threads the bilayer. Topologically, residues 512–548 (SKGKSLEELSGENEMEAEPAAATNSYRQTVPDSGQSE) are cytoplasmic. The tract at residues 518 to 548 (EELSGENEMEAEPAAATNSYRQTVPDSGQSE) is disordered. The span at 533–548 (ATNSYRQTVPDSGQSE) shows a compositional bias: polar residues.

The protein belongs to the major facilitator superfamily. Phosphate:H(+) symporter (TC 2.A.1.9) family. In terms of tissue distribution, expressed at low levels in roots.

Its subcellular location is the membrane. Its function is as follows. High-affinity transporter for external inorganic phosphate. This is Probable inorganic phosphate transporter 1-5 (PHT1-5) from Oryza sativa subsp. japonica (Rice).